The sequence spans 185 residues: Meiotic expression up-regulated protein 31 (185 aa).

The polypeptide is Meiotic expression up-regulated protein 31 (meu31) (Schizosaccharomyces pombe (strain 972 / ATCC 24843) (Fission yeast)).